A 475-amino-acid polypeptide reads, in one-letter code: BTB/POZ domain-containing protein 10 (475 aa).

Residues 1-143 (MAGRPHPYDG…SSQSSSDGSC (143 aa)) form a disordered region. Residues 22 to 31 (LHSRPRKLYK) show a composition bias toward basic residues. The span at 57 to 80 (GHERSRDRRRSSDRSRDSSHERTE) shows a compositional bias: basic and acidic residues. Positions 81-94 (SQLTPCIRNVTSPT) are enriched in polar residues. Residues 97–107 (HHVEREKDHSS) are compositionally biased toward basic and acidic residues. The span at 108–142 (SRPSSPRPQKASPNGSISSAGNSSRNSSQSSSDGS) shows a compositional bias: low complexity. Residues 146–475 (AGEMVFVYEN…LDPDAQNPTL (330 aa)) are interaction with AKT family members. Residues 167–241 (ERVTLIVDNT…YKTGIIRCPD (75 aa)) form the BTB domain. Residues 456–475 (PIHPPSGNSDLDPDAQNPTL) form a disordered region.

As to quaternary structure, interacts (via C-terminal 330-amino-acid region) with AKT1; AKT2 and AKT3. Interacts with PPP2CA and PPP1CA.

The protein localises to the nucleus. Its subcellular location is the cytoplasm. Its function is as follows. Plays a major role as an activator of AKT family members by inhibiting PPP2CA-mediated dephosphorylation, thereby keeping AKTs activated. Plays a role in preventing motor neuronal death and in accelerating the growth of pancreatic beta cells. This is BTB/POZ domain-containing protein 10 (BTBD10) from Pongo abelii (Sumatran orangutan).